We begin with the raw amino-acid sequence, 476 residues long: Glutamyl-tRNA(Gln) amidotransferase subunit A (476 aa).

Residues lysine 77 and serine 152 each act as charge relay system in the active site. The active-site Acyl-ester intermediate is the serine 176.

This sequence belongs to the amidase family. GatA subfamily. As to quaternary structure, heterotrimer of A, B and C subunits.

The catalysed reaction is L-glutamyl-tRNA(Gln) + L-glutamine + ATP + H2O = L-glutaminyl-tRNA(Gln) + L-glutamate + ADP + phosphate + H(+). Allows the formation of correctly charged Gln-tRNA(Gln) through the transamidation of misacylated Glu-tRNA(Gln) in organisms which lack glutaminyl-tRNA synthetase. The reaction takes place in the presence of glutamine and ATP through an activated gamma-phospho-Glu-tRNA(Gln). In Acidobacterium capsulatum (strain ATCC 51196 / DSM 11244 / BCRC 80197 / JCM 7670 / NBRC 15755 / NCIMB 13165 / 161), this protein is Glutamyl-tRNA(Gln) amidotransferase subunit A.